The sequence spans 56 residues: MVQNDFVDSYDVTMLLQDDDGKQYYEYHKGLSLSDFEVLYGNTADEIIKLRLDKVL.

Belongs to the phi29likevirus protein p56 family. As to quaternary structure, homodimer. Interacts with host UDG; this interaction inhibits the uracil-DNA glycosylase.

In terms of biological role, inhibits the host uracil-DNA glycosylase (UDG), an enzyme which removes uracil residues from DNA by the base excision repair. Interacts with host uracil-DNA glycosylase and prevents the latter from binding to DNA. Since the viral DNA polymerase efficiently incorporates dUMP into DNA, the virus needs to prevent the deleterious effect caused by host UDG when it eliminates uracil residues present in the viral genome. In Bacillus phage phi29 (Bacteriophage phi-29), this protein is Protein p56.